The sequence spans 299 residues: Bifunctional protein FolD (299 aa).

Residues 168 to 170 (GRS), serine 193, and isoleucine 234 each bind NADP(+).

It belongs to the tetrahydrofolate dehydrogenase/cyclohydrolase family. As to quaternary structure, homodimer.

It catalyses the reaction (6R)-5,10-methylene-5,6,7,8-tetrahydrofolate + NADP(+) = (6R)-5,10-methenyltetrahydrofolate + NADPH. The catalysed reaction is (6R)-5,10-methenyltetrahydrofolate + H2O = (6R)-10-formyltetrahydrofolate + H(+). It functions in the pathway one-carbon metabolism; tetrahydrofolate interconversion. Its function is as follows. Catalyzes the oxidation of 5,10-methylenetetrahydrofolate to 5,10-methenyltetrahydrofolate and then the hydrolysis of 5,10-methenyltetrahydrofolate to 10-formyltetrahydrofolate. The polypeptide is Bifunctional protein FolD (Brucella anthropi (strain ATCC 49188 / DSM 6882 / CCUG 24695 / JCM 21032 / LMG 3331 / NBRC 15819 / NCTC 12168 / Alc 37) (Ochrobactrum anthropi)).